Here is a 708-residue protein sequence, read N- to C-terminus: MATGRIQFAVSTPCNTKGKPSGYRLFEFKNDRLALVPSERGCTKVDVNANIQAFCYLRPNGRDTSISPDATHILDSCDYMVLAKSNGFIEIISNYQYKIKNGLRLAPSYILRCTPEDFESNFFSDYMIAGLEYSQGLLYCCMCSGRIYVFVMNLPTDYIQYKNMYNPMFPDCFFKVHHDNNTTHSSEEEKLFEGSTRYTGRSCSKHICYFLLPIEPSHLRSSPVVSSFCNMYQGLPIYRPSMYLHIERGISTFHINPLDRFCFMTVSPRSPLFIRKIILPLTYVTFLSTFISLKNSIQGDTCGEILSWDNVAQQNGFGSLFSWISNKFTFDTDIINSTIWDDIVKYSGTGMLDSGIVWKQRQGHAKDDIYELFHTQDMLGSSRRNSSFSTASSEPRPLSRRRRESFQALTRDAFRERMDVPCSTKWELDSFIRGLRRNTFMVDFEIVEKISHRNGNDGVNEDDNTTDESDETMTSFLTDNYKKMDIVCIDHFVTLSAFRPRYYDEPIIKIDSLSNKNGSENGTNEEEWAESQMKVDGQVIDDETAQFKQALGNLCSFKKLFMLDDSLCFILDTHGVLLINRFEIKNTKNLLRNSKDTIRIIPHDFGLINDTIVIINDIDVGTDNVCALTFHLVVTSMAGEITVLKGEFFKNCRLGRIKLCDSLKLNRKDRFVDKLALIDYDGLNAQKRRLDYDEKDLYTFIVKKVKRD.

Residues 381–396 show a composition bias toward low complexity; the sequence is SSRRNSSFSTASSEPR. A disordered region spans residues 381-403; the sequence is SSRRNSSFSTASSEPRPLSRRRR.

In terms of assembly, interacts with core components of the GID/CTLH ubiquitin ligase complex. GID12 binds both the substrate receptor GID4 and the tip of GID5 in the scaffolding module, sealing GID4 onto the scaffold.

Functionally, regulator of the GID E3 ligase complex. Modulates both assembly of the substrate receptor GID4 into the GID E3 ligase complex and its activity toward its substrates. GID12-binding remodels the N-degron binding pocket in the GID(SR4) complex, and could limit substrate accessibility of a bulky substrate to a ubiquitynation active site, thereby stabilizing gluconeogenic enzyme substrates. Involved in actin patch formation. This Saccharomyces cerevisiae (strain ATCC 204508 / S288c) (Baker's yeast) protein is GID complex associated protein 12.